A 579-amino-acid chain; its full sequence is Probable pectinesterase/pectinesterase inhibitor 7 (579 aa).

An N-terminal signal peptide occupies residues 1–20; it reads MESPIFILITLSFFLQSVLA. The segment at 22–185 is pectinesterase inhibitor 7; that stretch reads SQTLSNSSTI…TKLLGVSLAL (164 aa). 8 N-linked (GlcNAc...) asparagine glycosylation sites follow: Asn-27, Asn-115, Asn-174, Asn-274, Asn-277, Asn-287, Asn-326, and Asn-333. The pectinesterase 7 stretch occupies residues 265–564; sequence VTVSQDGTGN…TVTGLFIEAD (300 aa). Position 342 (Thr-342) interacts with substrate. The N-linked (GlcNAc...) asparagine glycan is linked to Asn-359. A substrate-binding site is contributed by Gln-372. The Proton donor; for pectinesterase activity role is filled by Asp-395. Cysteines 409 and 429 form a disulfide. The Nucleophile; for pectinesterase activity role is filled by Asp-416. N-linked (GlcNAc...) asparagine glycosylation is found at Asn-462 and Asn-475. Arg-484 and Trp-486 together coordinate substrate. Asn-526, Asn-533, Asn-547, and Asn-553 each carry an N-linked (GlcNAc...) asparagine glycan.

In the N-terminal section; belongs to the PMEI family. This sequence in the C-terminal section; belongs to the pectinesterase family. As to expression, expressed in siliques.

It is found in the secreted. It localises to the cell wall. The enzyme catalyses [(1-&gt;4)-alpha-D-galacturonosyl methyl ester](n) + n H2O = [(1-&gt;4)-alpha-D-galacturonosyl](n) + n methanol + n H(+). It participates in glycan metabolism; pectin degradation; 2-dehydro-3-deoxy-D-gluconate from pectin: step 1/5. In terms of biological role, acts in the modification of cell walls via demethylesterification of cell wall pectin. The sequence is that of Probable pectinesterase/pectinesterase inhibitor 7 (PME7) from Arabidopsis thaliana (Mouse-ear cress).